We begin with the raw amino-acid sequence, 212 residues long: MKTVVLLLCLLGSAQSLPRQLSPALGAPATKPTPGQVTPLTQQQPNQVFPSISLIPLTQLLTLGSDLPLFNPATMPHGTQTLPFTLGPLNGQQQLQPQMLPIIVAQLGAQGALLSSEELPLASQIFTGLLIHPLFPGAIQPSGQTGAKPDVQNGALPTRQAGASPANQATTPGHTTPAVTDDDDYEMSTPAGLQRATHTTEGTTMDPPNRTK.

The N-terminal stretch at 1 to 16 (MKTVVLLLCLLGSAQS) is a signal peptide. 2 disordered regions span residues 23–42 (PALG…PLTQ) and 141–212 (PSGQ…NRTK). Composition is skewed to polar residues over residues 33 to 42 (TPGQVTPLTQ) and 165 to 178 (PANQ…TTPA).

This sequence belongs to the amelotin family. Post-translationally, O-glycosylated. In terms of processing, phosphorylated by FAM20C in vitro. Highest expression in the mandible. Found in the basal lamina of maturation stage ameloblasts of incisors and unerupted molars. Also found in the internal basal lamina of junctional epithelium in molars.

It is found in the secreted. In terms of biological role, is a promoter of calcium phosphate mineralization, playing a critical role in the formation of the compact, mineralized, aprismatic enamel surface layer during the maturation stage of amelogenesis. The polypeptide is Amelotin (Rattus norvegicus (Rat)).